The sequence spans 361 residues: Putative F-box protein At3g19560 (361 aa).

Residues 3–49 (MTMMSDISQDLLEEILSRVPITSLRAVKSTCKRWKDLLNDPSFSKKY) enclose the F-box domain.

The chain is Putative F-box protein At3g19560 from Arabidopsis thaliana (Mouse-ear cress).